A 72-amino-acid polypeptide reads, in one-letter code: Large ribosomal subunit protein bL31 (72 aa).

Zn(2+)-binding residues include cysteine 16, cysteine 18, cysteine 37, and cysteine 40.

This sequence belongs to the bacterial ribosomal protein bL31 family. Type A subfamily. In terms of assembly, part of the 50S ribosomal subunit. Zn(2+) serves as cofactor.

Binds the 23S rRNA. This chain is Large ribosomal subunit protein bL31, found in Buchnera aphidicola subsp. Schizaphis graminum (strain Sg).